The following is a 434-amino-acid chain: 3-phosphoshikimate 1-carboxyvinyltransferase (434 aa).

3-phosphoshikimate-binding residues include Lys-22, Ser-23, and Arg-27. Lys-22 provides a ligand contact to phosphoenolpyruvate. Residues Gly-93 and Arg-121 each coordinate phosphoenolpyruvate. 3-phosphoshikimate contacts are provided by Ser-168, Ser-169, Gln-170, Ser-199, Asp-320, and Lys-347. A phosphoenolpyruvate-binding site is contributed by Gln-170. Asp-320 serves as the catalytic Proton acceptor. 3 residues coordinate phosphoenolpyruvate: Arg-351, Arg-394, and Lys-419.

Belongs to the EPSP synthase family. In terms of assembly, monomer.

The protein localises to the cytoplasm. The enzyme catalyses 3-phosphoshikimate + phosphoenolpyruvate = 5-O-(1-carboxyvinyl)-3-phosphoshikimate + phosphate. It participates in metabolic intermediate biosynthesis; chorismate biosynthesis; chorismate from D-erythrose 4-phosphate and phosphoenolpyruvate: step 6/7. Functionally, catalyzes the transfer of the enolpyruvyl moiety of phosphoenolpyruvate (PEP) to the 5-hydroxyl of shikimate-3-phosphate (S3P) to produce enolpyruvyl shikimate-3-phosphate and inorganic phosphate. The protein is 3-phosphoshikimate 1-carboxyvinyltransferase of Burkholderia vietnamiensis (strain G4 / LMG 22486) (Burkholderia cepacia (strain R1808)).